A 410-amino-acid polypeptide reads, in one-letter code: Probable protein S-acyltransferase 6 (410 aa).

Transmembrane regions (helical) follow at residues 45 to 65 (LGLT…FVAS) and 76 to 96 (GVSI…LLML). Positions 108 to 129 (NSHPPEPEVVDGNTGSGTSQTP) are disordered. Residues 147-197 (KYCDTCMLYRPPRCSHCSICNNCVERFDHHCPWVGQCIAQRNYRFFFMFVF) form the DHHC domain. The active-site S-palmitoyl cysteine intermediate is the Cys-177. 2 helical membrane passes run 191-211 (FFFM…AFCC) and 235-255 (SIAL…LTCF). Position 325 is a phosphoserine (Ser-325).

Belongs to the DHHC palmitoyltransferase family.

It is found in the cell membrane. It carries out the reaction L-cysteinyl-[protein] + hexadecanoyl-CoA = S-hexadecanoyl-L-cysteinyl-[protein] + CoA. In terms of biological role, palmitoyl acyltransferase. This chain is Probable protein S-acyltransferase 6 (PAT06), found in Arabidopsis thaliana (Mouse-ear cress).